A 438-amino-acid chain; its full sequence is Serine--tRNA ligase (438 aa).

243 to 245 (TAE) contacts L-serine. ATP is bound at residue 274–276 (RSE). Residue glutamate 297 coordinates L-serine. ATP is bound at residue 361 to 364 (EISS). Serine 396 provides a ligand contact to L-serine.

The protein belongs to the class-II aminoacyl-tRNA synthetase family. Type-1 seryl-tRNA synthetase subfamily. In terms of assembly, homodimer. The tRNA molecule binds across the dimer.

The protein localises to the cytoplasm. It carries out the reaction tRNA(Ser) + L-serine + ATP = L-seryl-tRNA(Ser) + AMP + diphosphate + H(+). The enzyme catalyses tRNA(Sec) + L-serine + ATP = L-seryl-tRNA(Sec) + AMP + diphosphate + H(+). It participates in aminoacyl-tRNA biosynthesis; selenocysteinyl-tRNA(Sec) biosynthesis; L-seryl-tRNA(Sec) from L-serine and tRNA(Sec): step 1/1. Its function is as follows. Catalyzes the attachment of serine to tRNA(Ser). Is also able to aminoacylate tRNA(Sec) with serine, to form the misacylated tRNA L-seryl-tRNA(Sec), which will be further converted into selenocysteinyl-tRNA(Sec). The sequence is that of Serine--tRNA ligase from Ralstonia pickettii (strain 12J).